The following is a 150-amino-acid chain: Large ribosomal subunit protein bL9 (150 aa).

This sequence belongs to the bacterial ribosomal protein bL9 family.

Functionally, binds to the 23S rRNA. This is Large ribosomal subunit protein bL9 from Janthinobacterium sp. (strain Marseille) (Minibacterium massiliensis).